The chain runs to 188 residues: Transcription factor E (188 aa).

Residues 9-98 (DLEVLRDVTL…SWRLNLREVL (90 aa)) form the HTH TFE/IIEalpha-type domain.

This sequence belongs to the TFE family. In terms of assembly, monomer. Interaction with RNA polymerase subunits RpoF and RpoE is necessary for Tfe stimulatory transcription activity. Able to interact with Tbp and RNA polymerase in the absence of DNA promoter. Interacts both with the preinitiation and elongation complexes.

Functionally, transcription factor that plays a role in the activation of archaeal genes transcribed by RNA polymerase. Facilitates transcription initiation by enhancing TATA-box recognition by TATA-box-binding protein (Tbp), and transcription factor B (Tfb) and RNA polymerase recruitment. Not absolutely required for transcription in vitro, but particularly important in cases where Tbp or Tfb function is not optimal. It dynamically alters the nucleic acid-binding properties of RNA polymerases by stabilizing the initiation complex and destabilizing elongation complexes. Seems to translocate with the RNA polymerase following initiation and acts by binding to the non template strand of the transcription bubble in elongation complexes. This chain is Transcription factor E, found in Methanopyrus kandleri (strain AV19 / DSM 6324 / JCM 9639 / NBRC 100938).